The following is a 481-amino-acid chain: U6 small nuclear RNA (adenine-(43)-N(6))-methyltransferase (481 aa).

S-adenosyl-L-methionine contacts are provided by Lys82, Gly108, Asp131, Thr164, and Asn184.

The protein belongs to the methyltransferase superfamily. METTL16/RlmF family. As to quaternary structure, self-associates. Interacts with dlc-1; the interaction is direct, and is required for nuclear localization of mett-10.

It is found in the nucleus. The catalysed reaction is an adenosine in mRNA + S-adenosyl-L-methionine = an N(6)-methyladenosine in mRNA + S-adenosyl-L-homocysteine + H(+). The enzyme catalyses adenosine in U6 snRNA + S-adenosyl-L-methionine = N(6)-methyladenosine in U6 snRNA + S-adenosyl-L-homocysteine + H(+). Its function is as follows. RNA N6-methyltransferase that methylates adenosine residues at the N(6) position of a subset of RNAs and is involved in S-adenosyl-L-methionine homeostasis by regulating splicing of S-adenosylmethionine synthase transcripts (sams-3, sams-4 and sams-5). Able to N6-methylate a subset of mRNAs containing the 5'UACAGAAAC-3' nonamer sequence. Plays a key role in S-adenosyl-L-methionine homeostasis: under rich-diet conditions, catalyzes N6-methylation of S-adenosylmethionine synthase mRNAs (sams-3, sams-4 and sams-5), directly inhibiting splicing and protein production of S-adenosylmethionine synthase. In addition to mRNAs, also able to mediate N6-methylation of U6 small nuclear RNA (U6 snRNA). Required for gamete production, inhibiting germ cell proliferative fate and ensuring germ cell meiotic development. Also promotes progression of the mitotic cell cycle in those germ cells that continue to proliferate. Plays a role in the development of the vulva, somatic gonad and embryo. This is U6 small nuclear RNA (adenine-(43)-N(6))-methyltransferase from Caenorhabditis briggsae.